The primary structure comprises 156 residues: MKIQLVAVGTRMPDWVETGFKEYQRRFPRDMALELIEIPAGKRGKNADIARILQKEGELMLAAIPKGNHIVSLDLPGKNLKTPELAQQMNKWLLDGRDVSLLIGGPEGLSPDCKKAAAQSWCLSALTLPHPLVRVIVAESLYRGWSINNNHPYHRE.

S-adenosyl-L-methionine is bound by residues Leu73, Gly104, and 123–128 (LSALTL).

This sequence belongs to the RNA methyltransferase RlmH family. In terms of assembly, homodimer.

The protein resides in the cytoplasm. It catalyses the reaction pseudouridine(1915) in 23S rRNA + S-adenosyl-L-methionine = N(3)-methylpseudouridine(1915) in 23S rRNA + S-adenosyl-L-homocysteine + H(+). Specifically methylates the pseudouridine at position 1915 (m3Psi1915) in 23S rRNA. The protein is Ribosomal RNA large subunit methyltransferase H of Shewanella piezotolerans (strain WP3 / JCM 13877).